A 219-amino-acid polypeptide reads, in one-letter code: MENCRTPTNKTQITLNRTPTLKERRWNTLKVNTTNVRCSTPIFGNFRSPNLSPIESMGTKKSPVSPMRFAFKKPPAKAHPHPHQHQHHHHHHKHIHRTQLKPPPFILPKPQEEIIEPEREIKICSSPDTFSDDSNMETSLVVESRRRSIKASNHSYVVNHAANVEQILMHMGLENYVTNFEEAHIDLVKLASMERADLVKIGLNADEDCNRIMDVLQTL.

Basic residues predominate over residues 74–99; sequence PPAKAHPHPHQHQHHHHHHKHIHRTQ. A disordered region spans residues 74-104; sequence PPAKAHPHPHQHQHHHHHHKHIHRTQLKPPP. In terms of domain architecture, SAM spans 159–219; the sequence is NHAANVEQIL…NRIMDVLQTL (61 aa).

In terms of assembly, interacts with polo. Interacts with cort. Post-translationally, probably ubiquitinated: degraded during the oocyte-to-embryo transition by the anaphase promoting complex/cyclosome (APC/C) containing cort protein.

It localises to the nucleus. Its subcellular location is the chromosome. Its function is as follows. Polo kinase inhibitor required to maintain G2 arrest in the meiotic cell cycle in females. Holds heterochromatically paired homologs together from the end of pachytene until metaphase I. Haploinsufficient locus for homologous achiasmate segregation and may be required for the maintenance of heterochromatic pairings. The polypeptide is Protein matrimony (mtrm) (Drosophila yakuba (Fruit fly)).